We begin with the raw amino-acid sequence, 267 residues long: Tryptophan synthase alpha chain (267 aa).

Catalysis depends on proton acceptor residues glutamate 43 and aspartate 54.

It belongs to the TrpA family. In terms of assembly, tetramer of two alpha and two beta chains.

It catalyses the reaction (1S,2R)-1-C-(indol-3-yl)glycerol 3-phosphate + L-serine = D-glyceraldehyde 3-phosphate + L-tryptophan + H2O. It participates in amino-acid biosynthesis; L-tryptophan biosynthesis; L-tryptophan from chorismate: step 5/5. Its function is as follows. The alpha subunit is responsible for the aldol cleavage of indoleglycerol phosphate to indole and glyceraldehyde 3-phosphate. The chain is Tryptophan synthase alpha chain from Bacillus licheniformis (strain ATCC 14580 / DSM 13 / JCM 2505 / CCUG 7422 / NBRC 12200 / NCIMB 9375 / NCTC 10341 / NRRL NRS-1264 / Gibson 46).